The chain runs to 292 residues: uncharacterized protein (292 aa).

The helical transmembrane segment at Ser17–Met37 threads the bilayer.

To M.jannaschii MJ0137.

It localises to the membrane. This is an uncharacterized protein from Methanocaldococcus jannaschii (strain ATCC 43067 / DSM 2661 / JAL-1 / JCM 10045 / NBRC 100440) (Methanococcus jannaschii).